The following is a 448-amino-acid chain: Microtubule-associated protein tau (448 aa).

Residues 1–16 (MAEPRQEFDVMEDHAQ) show a composition bias toward basic and acidic residues. Residues 1-264 (MAEPRQEFDV…GPMPDLKNVK (264 aa)) form a disordered region. The residue at position 2 (alanine 2) is an N-acetylalanine. Tyrosine 19 carries the phosphotyrosine modification. Lysine 33 is covalently cross-linked (Glycyl lysine isopeptide (Lys-Gly) (interchain with G-Cter in ubiquitin)). Phosphoserine occurs at positions 35 and 50. Positions 50-60 (SETSDAKSTPT) are enriched in polar residues. Phosphothreonine occurs at positions 58 and 60. The span at 71–89 (EGAPGEQAAAQAPAEIPEG) shows a compositional bias: low complexity. At threonine 100 the chain carries Phosphothreonine. Residues 119 to 135 (KGKDGTGPDDKKTKGAD) show a composition bias toward basic and acidic residues. Threonine 144 bears the Phosphothreonine mark. Arginine 146 carries the post-translational modification Omega-N-methylarginine. The residue at position 154 (lysine 154) is an N6,N6-dimethyllysine; alternate. Lysine 154 is subject to N6-acetyllysine; alternate. A phosphothreonine mark is found at threonine 160, threonine 166, threonine 167, and threonine 172. Low complexity predominate over residues 163–176 (PAKTTPTPKTSPAT). Positions 189-200 (KSERGESGKSGD) are enriched in basic and acidic residues. 2 positions are modified to phosphoserine: serine 198 and serine 202. Over residues 201–221 (RSGYSSPGSPGTPGSRSRTPS) the composition is skewed to low complexity. Tyrosine 204 is modified (phosphotyrosine). A phosphoserine mark is found at serine 205, serine 206, and serine 209. Residues threonine 212 and threonine 219 each carry the phosphothreonine modification. Serine 221 bears the Phosphoserine mark. Threonine 224 carries the post-translational modification Phosphothreonine. Lysine 232 is subject to N6-acetyllysine. Residue threonine 238 is modified to Phosphothreonine. 2 positions are modified to phosphoserine: serine 242 and serine 244. Tau/MAP repeat units lie at residues 251 to 281 (QAAP…GGGK), 282 to 312 (VQII…GGGS), 313 to 343 (VQIV…GGGQ), and 344 to 375 (VEVK…GGGN). Lysine 261 participates in a covalent cross-link: Glycyl lysine isopeptide (Lys-Gly) (interchain with G-Cter in ubiquitin). N6-acetyllysine; alternate is present on lysine 266. N6-methyllysine; alternate is present on lysine 266. Lysine 266 is covalently cross-linked (Glycyl lysine isopeptide (Lys-Gly) (interchain with G-Cter in ubiquitin); alternate). The residue at position 269 (serine 269) is a Phosphoserine. Residue lysine 274 forms a Glycyl lysine isopeptide (Lys-Gly) (interchain with G-Cter in ubiquitin) linkage. Lysine 288 is modified (N6-acetyllysine; alternate). Residue lysine 288 forms a Glycyl lysine isopeptide (Lys-Gly) (interchain with G-Cter in ubiquitin); alternate linkage. Phosphoserine occurs at positions 292 and 296. Position 297 is an N6-acetyllysine (lysine 297). The cysteines at positions 298 and 329 are disulfide-linked. Serine 300 bears the Phosphoserine mark. An N6-acetyllysine; alternate modification is found at lysine 305. Residue lysine 305 forms a Glycyl lysine isopeptide (Lys-Gly) (interchain with G-Cter in ubiquitin); alternate linkage. Phosphoserine is present on serine 312. Lysine 318 carries the post-translational modification N6,N6-dimethyllysine; alternate. 3 positions are modified to N6-acetyllysine; alternate: lysine 318, lysine 324, and lysine 328. Glycyl lysine isopeptide (Lys-Gly) (interchain with G-Cter in ubiquitin); alternate cross-links involve residues lysine 318, lysine 324, and lysine 328. At serine 331 the chain carries Phosphoserine. N6-acetyllysine; alternate occurs at positions 338, 350, and 354. Glycyl lysine isopeptide (Lys-Gly) (interchain with G-Cter in ubiquitin); alternate cross-links involve residues lysine 338, lysine 350, and lysine 354. Omega-N-methylarginine is present on arginine 356. Serine 359 carries the phosphoserine modification. Lysine 360 participates in a covalent cross-link: Glycyl lysine isopeptide (Lys-Gly) (interchain with G-Cter in ubiquitin). Serine 363 carries the phosphoserine modification. N6-acetyllysine; alternate is present on lysine 376. Lysine 376 participates in a covalent cross-link: Glycyl lysine isopeptide (Lys-Gly) (interchain with G-Cter in ubiquitin); alternate. Lysine 382 participates in a covalent cross-link: Glycyl lysine isopeptide (Lys-Gly) (interchain with G-Cter in ubiquitin). An N6-acetyllysine; alternate modification is found at lysine 392. Lysine 392 is covalently cross-linked (Glycyl lysine isopeptide (Lys-Gly) (interchain with G-Cter in ubiquitin); alternate). Phosphotyrosine is present on tyrosine 401. 2 positions are modified to phosphoserine: serine 403 and serine 407. The tract at residues 405-424 (VVSGDTSPRHLSNVSSTGSI) is disordered. The span at 408–423 (GDTSPRHLSNVSSTGS) shows a compositional bias: polar residues. At threonine 410 the chain carries Phosphothreonine. Residues serine 411, serine 416, serine 423, and serine 429 each carry the phosphoserine modification. Phosphothreonine is present on threonine 434.

In terms of assembly, interacts with MARK1, MARK2, MARK3 and MARK4. Interacts with SQSTM1 when polyubiquitinated. Interacts with PSMC2 through SQSTM1. Interacts with FKBP4. Binds to CSNK1D. Interacts with SGK1. Interacts with PIN1. Interacts with LRRK2. Interacts with LRP1, leading to endocytosis; this interaction is reduced in the presence of LRPAP1/RAP. In terms of processing, polyubiquitinated. Requires functional TRAF6 and may provoke SQSTM1-dependent degradation by the proteasome. Phosphorylation at various serine and threonine residues in S-P or T-P motifs by proline-directed protein kinases (PDPK1, CDK1, CDK5, GSK3, MAPK) (a few sites per protein in interphase, more in mitosis), and at serine residues in K-X-G-S motifs by MAP/microtubule affinity-regulating kinase (MARK1, MARK2, MARK3, MARK4), causing detachment from microtubules, and their disassembly. Phosphorylation at Ser-269 by BRSK1 and BRSK2 in neurons affects ability to bind microtubules and plays a role in neuron polarization. Phosphorylated by PHK. Dephosphorylation at several serine and threonine residues by the serine/threonine phosphatase PPP5C. Post-translationally, O-glycosylated; contains at least 4 GlcNAc. Site-specific or stoichiometric changes in glycosylation may modulate tau function and also play a role in PHF's formation. As to expression, expressed in neurons.

The protein localises to the cytoplasm. It localises to the cytosol. Its subcellular location is the cell membrane. The protein resides in the cytoskeleton. It is found in the cell projection. The protein localises to the axon. It localises to the dendrite. Its subcellular location is the secreted. Promotes microtubule assembly and stability, and might be involved in the establishment and maintenance of neuronal polarity. The C-terminus binds axonal microtubules while the N-terminus binds neural plasma membrane components, suggesting that tau functions as a linker protein between both. Axonal polarity is predetermined by tau localization (in the neuronal cell) in the domain of the cell body defined by the centrosome. The short isoforms allow plasticity of the cytoskeleton whereas the longer isoforms may preferentially play a role in its stabilization. The sequence is that of Microtubule-associated protein tau (MAPT) from Bos taurus (Bovine).